An 831-amino-acid chain; its full sequence is MSSESHDKVVAKAIRLPTENYSVEKEIGKGSFAVVYKGLSLRDGRNIAIKAVSRSKLKNKKLLENLEVEIAILKKIKHPHIVGLIDCERTSSDFYLIMEYCALGDLTFFIKKRKNLVLKHPLIKTVFEHYPPPSTEHNGLNRVLVVNYLQQLSSALKFLRSKNLVHRDIKPQNLLLCTPLLDYNDPKTFHELGFVGIYNLPILKIADFGFARFLPNTSLAETLCGSPLYMAPEILNYQKYNAKADLWSVGTVLYEMCCGRPPFKASNHLELFQKIKKANDEITVPSNCYIEPKLFNLIRGLLTFDPDSRMGFTDFFNNEVVTEDLTRYEQSYEPDLESKSKDVAESNMFVSEYLVKPLKQQESAHIPPTQTDENTSVQTGVRRTSGKERLATNHPPHQQIHPEDNSQNPEQSYQSASQKRLKSSYNDLILEKEYVVVEKKTVEVNSLADDFANNGPITNNQGAQVIKPLRYRTSSSSDASGGRRASLVERRLSISSLSPSNALSKALGLASVRLFGYQHNTKATSSPPQQTLLNPQIFQELTENAVLRADHKLNPFSEQMLDSNITPAVESLAAKAFVMYSFAEMKFSQILPTPPSSTDYDPLSDKRLSNGSCAIEDEEDLDQGRPPSNQTLTSATTKISSATNVDTQIPAPELKKLCTESLLLYLKALTILAASMKLTSKWWYENESKNCTLKLNILVQWIRDRFNECLDKAEFLRLKLHAINTSPNSQWSDDDPVIFVEKLIYDRALDISRNAARMEMESGNYNTCELAYATSLWMLEILLDENFQFNEVYDDEYASNITSLDESDKEMIKKYISSIANRLKALKSKMV.

Residues tyrosine 21 to valine 321 enclose the Protein kinase domain. ATP-binding positions include isoleucine 27–valine 35 and lysine 50. Aspartate 168 (proton acceptor) is an active-site residue. Composition is skewed to polar residues over residues glutamine 360 to arginine 382 and asparagine 405 to lysine 419. The segment at glutamine 360–lysine 419 is disordered.

The protein belongs to the protein kinase superfamily. Ser/Thr protein kinase family. APG1/unc-51/ULK1 subfamily. As to quaternary structure, homodimer. Forms a ternary complex with ATG13 and ATG17.

It is found in the cytoplasm. The protein resides in the preautophagosomal structure membrane. It carries out the reaction L-seryl-[protein] + ATP = O-phospho-L-seryl-[protein] + ADP + H(+). The catalysed reaction is L-threonyl-[protein] + ATP = O-phospho-L-threonyl-[protein] + ADP + H(+). In terms of biological role, serine/threonine protein kinase involved in the cytoplasm to vacuole transport (Cvt) and found to be essential in autophagy, where it is required for the formation of autophagosomes. Involved in the clearance of protein aggregates which cannot be efficiently cleared by the proteasome. Required for selective autophagic degradation of the nucleus (nucleophagy) as well as for mitophagy which contributes to regulate mitochondrial quantity and quality by eliminating the mitochondria to a basal level to fulfill cellular energy requirements and preventing excess ROS production. Also involved in endoplasmic reticulum-specific autophagic process, in selective removal of ER-associated degradation (ERAD) substrates. Plays a key role in ATG9 and ATG23 cycling through the pre-autophagosomal structure and is necessary to promote ATG18 binding to ATG9 through phosphorylation of ATG9. Catalyzes phosphorylation of ATG4, decreasing the interaction between ATG4 and ATG8 and impairing deconjugation of PE-conjugated forms of ATG8. This chain is Serine/threonine-protein kinase ATG1, found in Kluyveromyces lactis (strain ATCC 8585 / CBS 2359 / DSM 70799 / NBRC 1267 / NRRL Y-1140 / WM37) (Yeast).